The following is a 539-amino-acid chain: Chaperonin GroEL (539 aa).

Residues 30–33, 87–91, glycine 414, 479–481, and aspartate 495 contribute to the ATP site; these read TLGP, DGTTT, and DAL.

This sequence belongs to the chaperonin (HSP60) family. In terms of assembly, forms a cylinder of 14 subunits composed of two heptameric rings stacked back-to-back. Interacts with the co-chaperonin GroES.

It localises to the cytoplasm. It carries out the reaction ATP + H2O + a folded polypeptide = ADP + phosphate + an unfolded polypeptide.. In terms of biological role, together with its co-chaperonin GroES, plays an essential role in assisting protein folding. The GroEL-GroES system forms a nano-cage that allows encapsulation of the non-native substrate proteins and provides a physical environment optimized to promote and accelerate protein folding. The protein is Chaperonin GroEL of Caldicellulosiruptor bescii (strain ATCC BAA-1888 / DSM 6725 / KCTC 15123 / Z-1320) (Anaerocellum thermophilum).